The primary structure comprises 265 residues: Mlc titration factor A (265 aa).

Positions 111, 148, 152, and 211 each coordinate Zn(2+).

It belongs to the MtfA family. In terms of assembly, interacts with Mlc. It depends on Zn(2+) as a cofactor.

The protein localises to the cytoplasm. Functionally, involved in the modulation of the activity of the glucose-phosphotransferase system (glucose-PTS). Interacts with the transcriptional repressor Mlc, preventing its interaction with DNA and leading to the modulation of expression of genes regulated by Mlc, including ptsG, which encodes the PTS system glucose-specific EIICB component. Its function is as follows. Shows zinc-dependent metallopeptidase activity. This chain is Mlc titration factor A, found in Cronobacter sakazakii (strain ATCC BAA-894) (Enterobacter sakazakii).